The chain runs to 86 residues: Defensin-like protein 97 (86 aa).

Positions 1–27 (MGSLRVSTFAVAVVVCLSILLMSPTDG) are cleaved as a signal peptide. Disulfide bonds link C31/C74, C38/C60, C44/C71, and C48/C73.

It belongs to the DEFL family.

It is found in the secreted. This Arabidopsis thaliana (Mouse-ear cress) protein is Defensin-like protein 97 (LCR85).